We begin with the raw amino-acid sequence, 309 residues long: MILPDVQATKSEVAINLSRVGVTNVKKLVKVARPDKRPIILISTFNMYVDLPSERRGANLSRNFEVIDEVLEDMVKSPVYEIEDLCGEVARRLLNRHEYATRSEVHMDSELIVKRKTPQTEMQSQKVVKVFAKAIAERGEAIKVRRVIGSEVIGITACPCAQEIMRVSAENELQNLGVPQEKIDAFLNKIPMATHNQRGRGIVSIETAGEYEVPLNTLINIIEQSMSTMSFELLKRGDEYEVVRNAHANPKFVEDCVRDMARRVVTEFKDLPDDAVVKIKQINEESIHQHNAFAELSTTMGKLRTEIGQ.

Belongs to the GTP cyclohydrolase IV family. Homodimer. It depends on Fe(2+) as a cofactor.

It carries out the reaction GTP + H2O = 7,8-dihydroneopterin 2',3'-cyclic phosphate + formate + diphosphate + H(+). The protein operates within cofactor biosynthesis; 5,6,7,8-tetrahydromethanopterin biosynthesis. Its function is as follows. Converts GTP to 7,8-dihydro-D-neopterin 2',3'-cyclic phosphate, the first intermediate in the biosynthesis of coenzyme methanopterin. The polypeptide is GTP cyclohydrolase MptA 2 (Methanocella arvoryzae (strain DSM 22066 / NBRC 105507 / MRE50)).